The following is a 394-amino-acid chain: NAD(P)H-quinone oxidoreductase subunit H (394 aa).

Belongs to the complex I 49 kDa subunit family. In terms of assembly, NDH-1 can be composed of about 15 different subunits; different subcomplexes with different compositions have been identified which probably have different functions.

It is found in the cellular thylakoid membrane. The enzyme catalyses a plastoquinone + NADH + (n+1) H(+)(in) = a plastoquinol + NAD(+) + n H(+)(out). It catalyses the reaction a plastoquinone + NADPH + (n+1) H(+)(in) = a plastoquinol + NADP(+) + n H(+)(out). Functionally, NDH-1 shuttles electrons from an unknown electron donor, via FMN and iron-sulfur (Fe-S) centers, to quinones in the respiratory and/or the photosynthetic chain. The immediate electron acceptor for the enzyme in this species is believed to be plastoquinone. Couples the redox reaction to proton translocation, and thus conserves the redox energy in a proton gradient. Cyanobacterial NDH-1 also plays a role in inorganic carbon-concentration. The protein is NAD(P)H-quinone oxidoreductase subunit H of Prochlorococcus marinus (strain MIT 9211).